Consider the following 254-residue polypeptide: uncharacterized protein (254 aa).

A run of 5 helical transmembrane segments spans residues 33-53, 70-90, 92-112, 133-153, and 223-243; these read MLWVGVFIHLLYNKSLLLFFI, FNKLVYIGVFLFLLSFILFKS, FALSFLVFYLIGIFLYYLNFM, FIIFLNAILFVIPYCIFILLI, and FLVFICLSYILYIVSPFPLIF.

To M.jannaschii MJ0902.

The protein resides in the cell membrane. This is an uncharacterized protein from Methanocaldococcus jannaschii (strain ATCC 43067 / DSM 2661 / JAL-1 / JCM 10045 / NBRC 100440) (Methanococcus jannaschii).